The chain runs to 411 residues: Glycogen synthase kinase-3 homolog MsK-3 (411 aa).

The 285-residue stretch at 74–358 (YMAERVVGHG…ALEALVHPFY (285 aa)) folds into the Protein kinase domain. ATP contacts are provided by residues 80 to 88 (VGHGSFGVV) and K103. D199 functions as the Proton acceptor in the catalytic mechanism. Y234 bears the Phosphotyrosine mark.

This sequence belongs to the protein kinase superfamily. CMGC Ser/Thr protein kinase family. GSK-3 subfamily. As to expression, absent in leaves and petioles, very low levels are seen in the stems and roots while a moderate expression is seen in the nodes.

The catalysed reaction is L-seryl-[protein] + ATP = O-phospho-L-seryl-[protein] + ADP + H(+). The enzyme catalyses L-threonyl-[protein] + ATP = O-phospho-L-threonyl-[protein] + ADP + H(+). The chain is Glycogen synthase kinase-3 homolog MsK-3 (MSK-3) from Medicago sativa (Alfalfa).